We begin with the raw amino-acid sequence, 218 residues long: Testis expressed protein 56 (218 aa).

This Rattus norvegicus (Rat) protein is Testis expressed protein 56 (Tex56).